Here is a 464-residue protein sequence, read N- to C-terminus: NADH-quinone oxidoreductase subunit N (464 aa).

The next 13 helical transmembrane spans lie at 5–25 (MLLA…VLFL), 31–51 (LLSA…PASL), 63–83 (LFAR…CLLS), 96–116 (EYAA…ASTS), 117–137 (LVSL…LIAV), 152–172 (LLPG…VYAA), 188–208 (GAPM…AAAF), 242–262 (VFAV…RPLL), 286–303 (MLAY…LAVL), 312–332 (AGLF…GLLA), 358–378 (AVLL…AGFM), 393–415 (VGLV…RPVL), and 436–456 (LIFV…GPFF).

It belongs to the complex I subunit 2 family. In terms of assembly, NDH-1 is composed of 14 different subunits. Subunits NuoA, H, J, K, L, M, N constitute the membrane sector of the complex.

It is found in the cell inner membrane. It catalyses the reaction a quinone + NADH + 5 H(+)(in) = a quinol + NAD(+) + 4 H(+)(out). In terms of biological role, NDH-1 shuttles electrons from NADH, via FMN and iron-sulfur (Fe-S) centers, to quinones in the respiratory chain. The immediate electron acceptor for the enzyme in this species is believed to be ubiquinone. Couples the redox reaction to proton translocation (for every two electrons transferred, four hydrogen ions are translocated across the cytoplasmic membrane), and thus conserves the redox energy in a proton gradient. The chain is NADH-quinone oxidoreductase subunit N from Syntrophotalea carbinolica (strain DSM 2380 / NBRC 103641 / GraBd1) (Pelobacter carbinolicus).